Consider the following 702-residue polypeptide: Ribosomal RNA large subunit methyltransferase K/L (702 aa).

In terms of domain architecture, THUMP spans 43–154; the sequence is LIYQSLMWSR…KETAHISLDL (112 aa).

Belongs to the methyltransferase superfamily. RlmKL family.

Its subcellular location is the cytoplasm. It catalyses the reaction guanosine(2445) in 23S rRNA + S-adenosyl-L-methionine = N(2)-methylguanosine(2445) in 23S rRNA + S-adenosyl-L-homocysteine + H(+). It carries out the reaction guanosine(2069) in 23S rRNA + S-adenosyl-L-methionine = N(2)-methylguanosine(2069) in 23S rRNA + S-adenosyl-L-homocysteine + H(+). Its function is as follows. Specifically methylates the guanine in position 2445 (m2G2445) and the guanine in position 2069 (m7G2069) of 23S rRNA. This is Ribosomal RNA large subunit methyltransferase K/L from Enterobacter sp. (strain 638).